We begin with the raw amino-acid sequence, 181 residues long: Mannose-specific lectin (181 aa).

The N-terminal stretch at 1-30 is a signal peptide; the sequence is MGRTTSSPKAMMRIATVAAILTILASTCMA. A Bulb-type lectin domain is found at 31 to 140; sequence RNVLTNGEGL…DIWSTGTYRR (110 aa). Residues Gln56, Asp58, Asn60, Tyr64, Trp71, Ala72, Asn74, Gln88, Asp90, Asn92, Tyr96, Val103, Trp104, Asn107, Asn114, Gln120, Asp122, Asn124, Tyr128, and Trp133 each contribute to the alpha-D-mannopyranose site. Cysteines 59 and 83 form a disulfide.

In terms of assembly, homodimer.

It localises to the secreted. In terms of biological role, mannose-specific lectin. Shows agglutinating activity towards rabbit erythrocytes. However, it does not show agglutinating activity towards human erythrocytes. Has insecticidal activity against the cotton leafworm S.littoralis and the peach potato aphid M.persicae. Also displays antiviral activity and therefore may contribute to defense against infections. In Allium sativum (Garlic), this protein is Mannose-specific lectin.